Consider the following 233-residue polypeptide: Pathogenesis-related thaumatin-like protein 3.2 (233 aa).

Residues 1–22 (MARAMHTVWIALVPTLFVFLQG) form the signal peptide. 8 disulfides stabilise this stretch: C36-C232, C77-C87, C92-C98, C145-C221, C151-C204, C159-C169, C173-C182, and C183-C191. N195 is a glycosylation site (N-linked (GlcNAc...) asparagine).

It belongs to the thaumatin family. As to expression, strongly expressed in roots and in female and male strobili, and, to a lower extent, in cotyledons, leaves, stems and pollen grains.

In terms of biological role, may be involved in disease resistance. In Cryptomeria japonica (Japanese cedar), this protein is Pathogenesis-related thaumatin-like protein 3.2.